Consider the following 230-residue polypeptide: Flagellar L-ring protein (230 aa).

The first 22 residues, 1-22 (MSPISNFARIALACTVAALLGG), serve as a signal peptide directing secretion. Cys-23 carries N-palmitoyl cysteine lipidation. Cys-23 is lipidated: S-diacylglycerol cysteine.

Belongs to the FlgH family. The basal body constitutes a major portion of the flagellar organelle and consists of four rings (L,P,S, and M) mounted on a central rod.

It localises to the cell outer membrane. Its subcellular location is the bacterial flagellum basal body. In terms of biological role, assembles around the rod to form the L-ring and probably protects the motor/basal body from shearing forces during rotation. The chain is Flagellar L-ring protein from Stenotrophomonas maltophilia (strain K279a).